We begin with the raw amino-acid sequence, 764 residues long: Phenylalanine--tRNA ligase beta subunit (764 aa).

The 111-residue stretch at 38–148 (CIAPKNVVVG…GELVLGKELH (111 aa)) folds into the tRNA-binding domain. A B5 domain is found at 375 to 455 (LKDCALTFQL…RFVGIDNLVS (81 aa)). Mg(2+) contacts are provided by Asp433, Asp439, Glu442, and Glu443. One can recognise an FDX-ACB domain in the interval 673–763 (SIYPSSVRDL…LEKEFNARLK (91 aa)).

The protein belongs to the phenylalanyl-tRNA synthetase beta subunit family. Type 1 subfamily. Tetramer of two alpha and two beta subunits. Requires Mg(2+) as cofactor.

It is found in the cytoplasm. It carries out the reaction tRNA(Phe) + L-phenylalanine + ATP = L-phenylalanyl-tRNA(Phe) + AMP + diphosphate + H(+). The polypeptide is Phenylalanine--tRNA ligase beta subunit (pheT) (Helicobacter pylori (strain J99 / ATCC 700824) (Campylobacter pylori J99)).